Reading from the N-terminus, the 938-residue chain is Isoleucine--tRNA ligase (938 aa).

The 'HIGH' region signature appears at 58 to 68 (PYANGNIHIGH). An L-isoleucyl-5'-AMP-binding site is contributed by E561. Residues 602–606 (KMSKS) carry the 'KMSKS' region motif. Residue K605 participates in ATP binding. Zn(2+)-binding residues include C901, C904, C921, and C924.

It belongs to the class-I aminoacyl-tRNA synthetase family. IleS type 1 subfamily. In terms of assembly, monomer. Requires Zn(2+) as cofactor.

It localises to the cytoplasm. It carries out the reaction tRNA(Ile) + L-isoleucine + ATP = L-isoleucyl-tRNA(Ile) + AMP + diphosphate. Functionally, catalyzes the attachment of isoleucine to tRNA(Ile). As IleRS can inadvertently accommodate and process structurally similar amino acids such as valine, to avoid such errors it has two additional distinct tRNA(Ile)-dependent editing activities. One activity is designated as 'pretransfer' editing and involves the hydrolysis of activated Val-AMP. The other activity is designated 'posttransfer' editing and involves deacylation of mischarged Val-tRNA(Ile). The polypeptide is Isoleucine--tRNA ligase (Yersinia pestis bv. Antiqua (strain Angola)).